The following is a 282-amino-acid chain: MRGTRLMGLLLALAGLLQLGLSLKIAAFNIRTFGETKMSNATLASYIVRIVRRYDIVLIQEVRDSHLVAVGKLLDYLNQDDPNTYHYVVSEPLGRNSYKERYLFLFRPNKVSVLDTYQYDDGCESCGNDSFSREPAVVKFSSHSTKVKEFAIVALHSAPSDAVAEINSLYDVYLDVQQKWHLNDVMLMGDFNADCSYVTSSQWSSIRLRTSSTFQWLIPDSADTTATSTNCAYDRIVVAGSLLQSSVVPGSAAPFDFQAAYGLSNEMALAISDHYPVEVTLT.

Residues 1 to 22 form the signal peptide; it reads MRGTRLMGLLLALAGLLQLGLS. Asn40 carries N-linked (GlcNAc...) asparagine glycosylation. Residue Glu100 is part of the active site. Cys123 and Cys126 are disulfide-bonded. His156 is a catalytic residue. Cys195 and Cys231 are joined by a disulfide.

It belongs to the DNase I family. Ca(2+) is required as a cofactor. Requires Mg(2+) as cofactor. Post-translationally, the only differences between the A and B forms and the C and D forms are in the compositions of the carbohydrate bound to Asn-40.

The protein localises to the secreted. The protein resides in the zymogen granule. It is found in the nucleus envelope. It carries out the reaction Endonucleolytic cleavage to 5'-phosphodinucleotide and 5'-phosphooligonucleotide end-products.. Serum endocuclease secreted into body fluids by a wide variety of exocrine and endocrine organs. Expressed by non-hematopoietic tissues and preferentially cleaves protein-free DNA. Among other functions, seems to be involved in cell death by apoptosis. Binds specifically to G-actin and blocks actin polymerization. Together with DNASE1L3, plays a key role in degrading neutrophil extracellular traps (NETs). NETs are mainly composed of DNA fibers and are released by neutrophils to bind pathogens during inflammation. Degradation of intravascular NETs by DNASE1 and DNASE1L3 is required to prevent formation of clots that obstruct blood vessels and cause organ damage following inflammation. This chain is Deoxyribonuclease-1 (DNASE1), found in Bos taurus (Bovine).